A 360-amino-acid chain; its full sequence is Cannabinoid receptor 2 (360 aa).

Residues 1–33 are Extracellular-facing; the sequence is MAGCRELELTNGSNGGLEFNPMKEYMILSDAQQ. Asn-11 carries N-linked (GlcNAc...) asparagine glycosylation. Residues 34 to 59 form a helical membrane-spanning segment; that stretch reads IAVAVLCTLMGLLSALENVAVLYLIL. The Cytoplasmic segment spans residues 60–71; the sequence is SSQRLRRKPSYL. Residues 72 to 92 form a helical membrane-spanning segment; it reads FIGSLAGADFLASVIFACNFV. Over 93–104 the chain is Extracellular; the sequence is IFHVFHGVDSRN. A helical transmembrane segment spans residues 105–129; it reads IFLLKIGSVTMTFTASVGSLLLTAV. The Cytoplasmic portion of the chain corresponds to 130–149; the sequence is DRYLCLCYPPTYKALVTRGR. Residues 150-172 traverse the membrane as a helical segment; the sequence is ALVALGVMWVLSALISYLPLMGW. The Extracellular portion of the chain corresponds to 173–188; sequence TCCPSPCSELFPLIPN. A helical membrane pass occupies residues 189 to 214; sequence DYLLGWLLFIAILFSGIIYTYGYVLW. Over 215-246 the chain is Cytoplasmic; that stretch reads KAHQHVASLAEHQDRQVPGIARMRLDVRLAKT. The helical transmembrane segment at 247 to 267 threads the bilayer; the sequence is LGLVMAVLLICWFPALALMGH. Residues 268–279 lie on the Extracellular side of the membrane; the sequence is SLVTTLSDKVKE. A helical transmembrane segment spans residues 280–301; it reads AFAFCSMLCLVNSMINPIIYAL. The Cytoplasmic portion of the chain corresponds to 302–360; the sequence is RSGEIRSAAQHCLTGWKKYLQGLGSEGKEEAPKSSVTETEAEVKTTTGPGSRTPGCSNC. Residues 327-360 are disordered; sequence EGKEEAPKSSVTETEAEVKTTTGPGSRTPGCSNC. 2 positions are modified to phosphoserine: Ser-335 and Ser-336. Position 338 is a phosphothreonine (Thr-338). Residues 349-360 show a composition bias toward polar residues; sequence GPGSRTPGCSNC. Ser-352 bears the Phosphoserine mark.

It belongs to the G-protein coupled receptor 1 family. Constitutively phosphorylated on Ser-352; phosphorylation increases cell internalization and desensitizes the receptor. In terms of tissue distribution, expressed in spleen and brain by neurons and glial cells (at protein level). Expressed in lung, testis and thymus but not in heart, liver or kidney. Expressed in cerebellum, cortex and brainstem.

Its subcellular location is the cell membrane. It localises to the cell projection. It is found in the dendrite. The protein resides in the perikaryon. Heterotrimeric G protein-coupled receptor for endocannabinoid 2-arachidonoylglycerol mediating inhibition of adenylate cyclase. May function in inflammatory response, nociceptive transmission and bone homeostasis. The sequence is that of Cannabinoid receptor 2 (Cnr2) from Rattus norvegicus (Rat).